Here is a 142-residue protein sequence, read N- to C-terminus: Hemoglobin subunit alpha (142 aa).

Ser-1 is modified (N-acetylserine). One can recognise a Globin domain in the interval 1–142 (SLSEKNKAAV…VALALADRYR (142 aa)). His-59 is an O2 binding site. His-88 provides a ligand contact to heme b.

Belongs to the globin family. Heterotetramer of two alpha chains and two beta chains. As to expression, red blood cells.

Its function is as follows. Involved in oxygen transport from gills to the various peripheral tissues. The sequence is that of Hemoglobin subunit alpha (hba) from Pagothenia borchgrevinki (Bald rockcod).